The following is a 595-amino-acid chain: Estrogen receptor (595 aa).

A modulating (transactivation AF-1); mediates interaction with MACROD1 region spans residues Met-1–Tyr-184. O-linked (GlcNAc) serine glycosylation is present at Ser-10. The tract at residues Leu-35 to Ser-47 is required for interaction with NCOA1. Residues Leu-35–Met-174 form an interaction with DDX5; self-association region. Phosphoserine; by CDK2 occurs at positions 104 and 106. Ser-118 is subject to Phosphoserine. The interval Ala-144–Met-174 is disordered. A compositionally biased stretch (basic and acidic residues) spans Ser-154–Leu-165. Ser-167 is modified (phosphoserine; by CK2). 2 consecutive NR C4-type zinc fingers follow at residues Cys-185 to Cys-205 and Cys-221 to Cys-245. The nuclear receptor DNA-binding region spans Cys-185 to Met-250. A mediates interaction with DNTTIP2 region spans residues Cys-185–Leu-310. Residues Met-251–Leu-310 are hinge. Residues Lys-257–Arg-269 show a composition bias toward basic residues. Positions Lys-257–Ser-288 are disordered. Arg-260 bears the Asymmetric dimethylarginine; by PRMT1 mark. Residues Gly-262–Ile-595 form an interaction with AKAP13 region. A self-association region spans residues Met-264 to Thr-594. In terms of domain architecture, NR LBD spans Thr-311–His-547. The interval Thr-311 to Thr-594 is transactivation AF-2. Residues Glu-353 and Arg-394 each coordinate 17beta-estradiol. Cys-447 is lipidated: S-palmitoyl cysteine. Residue His-524 participates in 17beta-estradiol binding. The residue at position 537 (Tyr-537) is a Phosphotyrosine; by Tyr-kinases. A disordered region spans residues Ala-551–Pro-575. Positions Met-563–Pro-575 are enriched in polar residues.

Belongs to the nuclear hormone receptor family. NR3 subfamily. In terms of assembly, binds DNA as a homodimer. Can form a heterodimer with ESR2. Interacts with coactivator NCOA5. Interacts with PELP1, the interaction is enhanced by 17-beta-estradiol; the interaction increases ESR1 transcriptional activity. Interacts with NCOA7; the interaction is ligand-inducible. Interacts with AKAP13, CUEDC2, HEXIM1, KDM5A, MAP1S, SMARD1, and UBE1C. Interacts with MUC1; the interaction is stimulated by 7 beta-estradiol (E2) and enhances ESR1-mediated transcription. Interacts with DNTTIP2, and UIMC1. Interacts with KMT2D/MLL2. Interacts with ATAD2; the interaction is enhanced by estradiol. Interacts with KIF18A and LDB1. Interacts with RLIM (via its C-terminus). Interacts with MACROD1. Interacts with SH2D4A and PLCG. Interacts with SH2D4A; the interaction blocks binding to PLCG and inhibits estrogen-induced cell proliferation. Interacts with DYNLL1. Interacts with CCDC62; the interaction requires estradiol and appears to enhance the transcription of target genes. Interacts with NR2C1; the interaction prevents homodimerization of ESR1 and suppresses its transcriptional activity and cell growth. Interacts with DNAAF4. Interacts with PRMT2. Interacts with RBFOX2. Interacts with EP300; the interaction is estrogen-dependent and enhanced by CITED1. Interacts with CITED1; the interaction is estrogen-dependent. Interacts with FAM120B, FOXL2, PHB2 and SLC30A9. Interacts with coactivators NCOA3 and NCOA6. Interacts with STK3/MST2 only in the presence of SAV1 and vice-versa. Binds to CSNK1D. Interacts with NCOA2; NCOA2 can interact with ESR1 AF-1 and AF-2 domains simultaneously and mediate their transcriptional synergy. Interacts with DDX5. Interacts with NCOA1; the interaction seems to require a self-association of N-terminal and C-terminal regions. Interacts with ZNF366, DDX17, NFKB1, RELA, SP1 and SP3. Interacts with NRIP1. Interacts with GPER1; the interaction occurs in an estrogen-dependent manner. Interacts with CLOCK and the interaction is stimulated by estrogen. Interacts with TRIP4 (ufmylated); estrogen dependent. Interacts with LMTK3; the interaction phosphorylates ESR1 (in vitro) and protects it against proteasomal degradation. Interacts with CCAR2 (via N-terminus) in a ligand-independent manner. Interacts with ZFHX3. Interacts with SFR1 in a ligand-dependent and -independent manner. Interacts with DCAF13, LATS1 and DCAF1; regulates ESR1 ubiquitination and ubiquitin-mediated proteasomal degradation. Interacts (via DNA-binding domain) with POU4F2 (C-terminus); this interaction increases the estrogen receptor ESR1 transcriptional activity in a DNA- and ligand 17-beta-estradiol-independent manner. Interacts with ESRRB isoform 1. Interacts with UBE3A and WBP2. Interacts with GTF2B. Interacts with RBM39. In the absence of hormonal ligand, interacts with TACC1. Interacts with PI3KR1 or PI3KR2 and PTK2/FAK1. Interacts with SRC. Interacts with BAG1; the interaction is promoted in the absence of estradiol (17-beta-estradiol/E2). Interacts with and ubiquitinated by STUB1; the interaction is promoted in the absence of estradiol (17-beta-estradiol/E2). Interacts with NEDD8. In terms of processing, phosphorylated by cyclin A/CDK2 and CK1. Phosphorylation probably enhances transcriptional activity. Dephosphorylation at Ser-118 by PPP5C inhibits its transactivation activity. Phosphorylated by LMTK3 (in vitro). Ubiquitinated; regulated by LATS1 via DCAF1 it leads to ESR1 proteasomal degradation. Deubiquitinated by OTUB1. Ubiquitinated by STUB1/CHIP; in the CA1 hippocampal region following loss of endogenous circulating estradiol (17-beta-estradiol/E2). Ubiquitinated by UBR5, leading to its degradation: UBR5 specifically recognizes and binds ligand-bound ESR1 when it is not associated with coactivators (NCOAs). In presence of NCOAs, the UBR5-degron is not accessible, preventing its ubiquitination and degradation. Post-translationally, palmitoylated at Cys-447 by ZDHHC7 and ZDHHC21. Palmitoylation is required for plasma membrane targeting and for rapid intracellular signaling via ERK and AKT kinases and cAMP generation, but not for signaling mediated by the nuclear hormone receptor. In terms of processing, dimethylated by PRMT1 at Arg-260. The methylation may favor cytoplasmic localization. Demethylated by JMJD6 at Arg-260.

It localises to the nucleus. It is found in the cytoplasm. The protein resides in the golgi apparatus. The protein localises to the cell membrane. Functionally, nuclear hormone receptor. The steroid hormones and their receptors are involved in the regulation of eukaryotic gene expression and affect cellular proliferation and differentiation in target tissues. Ligand-dependent nuclear transactivation involves either direct homodimer binding to a palindromic estrogen response element (ERE) sequence or association with other DNA-binding transcription factors, such as AP-1/c-Jun, c-Fos, ATF-2, Sp1 and Sp3, to mediate ERE-independent signaling. Ligand binding induces a conformational change allowing subsequent or combinatorial association with multiprotein coactivator complexes through LXXLL motifs of their respective components. Mutual transrepression occurs between the estrogen receptor (ER) and NF-kappa-B in a cell-type specific manner. Decreases NF-kappa-B DNA-binding activity and inhibits NF-kappa-B-mediated transcription from the IL6 promoter and displace RELA/p65 and associated coregulators from the promoter. Recruited to the NF-kappa-B response element of the CCL2 and IL8 promoters and can displace CREBBP. Present with NF-kappa-B components RELA/p65 and NFKB1/p50 on ERE sequences. Can also act synergistically with NF-kappa-B to activate transcription involving respective recruitment adjacent response elements; the function involves CREBBP. Can activate the transcriptional activity of TFF1. Also mediates membrane-initiated estrogen signaling involving various kinase cascades. Essential for MTA1-mediated transcriptional regulation of BRCA1 and BCAS3. Maintains neuronal survival in response to ischemic reperfusion injury when in the presence of circulating estradiol (17-beta-estradiol/E2). In Sus scrofa (Pig), this protein is Estrogen receptor (ESR1).